A 226-amino-acid polypeptide reads, in one-letter code: DNA mismatch repair protein MutH (226 aa).

This sequence belongs to the MutH family.

It localises to the cytoplasm. Functionally, sequence-specific endonuclease that cleaves unmethylated GATC sequences. It is involved in DNA mismatch repair. This chain is DNA mismatch repair protein MutH, found in Vibrio parahaemolyticus serotype O3:K6 (strain RIMD 2210633).